Here is a 225-residue protein sequence, read N- to C-terminus: Small ribosomal subunit protein uS3 (225 aa).

The 69-residue stretch at 38-106 (IRRFLQKKFK…PIGMNIIEVK (69 aa)) folds into the KH type-2 domain.

This sequence belongs to the universal ribosomal protein uS3 family. As to quaternary structure, part of the 30S ribosomal subunit. Forms a tight complex with proteins S10 and S14.

In terms of biological role, binds the lower part of the 30S subunit head. Binds mRNA in the 70S ribosome, positioning it for translation. The protein is Small ribosomal subunit protein uS3 of Leptospira biflexa serovar Patoc (strain Patoc 1 / Ames).